Reading from the N-terminus, the 457-residue chain is Flavohemoprotein-2 (457 aa).

The Globin domain occupies 2 to 157 (ALSEDTIKAV…LADLLIKREE (156 aa)). A heme b-binding site is contributed by histidine 106. Catalysis depends on charge relay system residues tyrosine 116 and glutamate 156. Positions 168-456 (GGWRQTRTFR…FEMFGPFKAS (289 aa)) are reductase. An FAD-binding FR-type domain is found at 171–278 (RQTRTFRVEE…APPYGDFFLR (108 aa)). Residues tyrosine 210 and 227–230 (RQYS) each bind FAD. 320–325 (GIGQTP) serves as a coordination point for NADP(+). An FAD-binding site is contributed by 449–452 (MFGP).

It belongs to the globin family. Two-domain flavohemoproteins subfamily. The protein in the C-terminal section; belongs to the flavoprotein pyridine nucleotide cytochrome reductase family. In terms of assembly, monomer. Heme b serves as cofactor. FAD is required as a cofactor.

The enzyme catalyses 2 nitric oxide + NADPH + 2 O2 = 2 nitrate + NADP(+) + H(+). The catalysed reaction is 2 nitric oxide + NADH + 2 O2 = 2 nitrate + NAD(+) + H(+). In terms of biological role, flavohemoprotein involved in nitric oxide (NO) detoxification in an aerobic process, termed nitric oxide dioxygenase (NOD) reaction that utilizes O(2) and NAD(P)H to convert NO to nitrate, which protects the protozoan parasite from various noxious nitrogen compounds. Therefore, plays a central role in the inducible response to nitrosative stress. May also be involved in O(2) detoxification. The protein is Flavohemoprotein-2 (hmpA-2) of Giardia intestinalis (strain P15) (Giardia lamblia).